The chain runs to 272 residues: ATP synthase subunit delta (272 aa).

The protein belongs to the ATPase delta chain family. F-type ATPases have 2 components, F(1) - the catalytic core - and F(0) - the membrane proton channel. F(1) has five subunits: alpha(3), beta(3), gamma(1), delta(1), epsilon(1). F(0) has three main subunits: a(1), b(2) and c(10-14). The alpha and beta chains form an alternating ring which encloses part of the gamma chain. F(1) is attached to F(0) by a central stalk formed by the gamma and epsilon chains, while a peripheral stalk is formed by the delta and b chains.

Its subcellular location is the cell membrane. Its function is as follows. F(1)F(0) ATP synthase produces ATP from ADP in the presence of a proton or sodium gradient. F-type ATPases consist of two structural domains, F(1) containing the extramembraneous catalytic core and F(0) containing the membrane proton channel, linked together by a central stalk and a peripheral stalk. During catalysis, ATP synthesis in the catalytic domain of F(1) is coupled via a rotary mechanism of the central stalk subunits to proton translocation. In terms of biological role, this protein is part of the stalk that links CF(0) to CF(1). It either transmits conformational changes from CF(0) to CF(1) or is implicated in proton conduction. The chain is ATP synthase subunit delta from Corynebacterium urealyticum (strain ATCC 43042 / DSM 7109).